A 65-amino-acid polypeptide reads, in one-letter code: MLTVLGRLLERNSIYVATIFGGAFAFQGFFDVAVNKWWEEHNKAKLWKNVKGKFLEGEGEEEDDE.

The helical transmembrane segment at Ile14–Val34 threads the bilayer.

It belongs to the UQCR10/QCR9 family. As to quaternary structure, component of the ubiquinol-cytochrome c oxidoreductase (cytochrome b-c1 complex, complex III, CIII), a multisubunit enzyme composed of 10 subunits. The complex is composed of 3 respiratory subunits cytochrome b (COB), cytochrome c1 (CYT1) and Rieske protein (RIP1), 2 core protein subunits COR1 and QCR2, and 5 low-molecular weight protein subunits QCR6, QCR7, QCR8, QCR9 and QCR10. The complex exists as an obligatory dimer and forms supercomplexes (SCs) in the inner mitochondrial membrane with a monomer or a dimer of cytochrome c oxidase (complex IV, CIV), resulting in 2 different assemblies (supercomplexes III(2)IV and III(2)IV(2)).

The protein resides in the membrane. Its subcellular location is the mitochondrion inner membrane. Its function is as follows. Component of the ubiquinol-cytochrome c oxidoreductase, a multisubunit transmembrane complex that is part of the mitochondrial electron transport chain which drives oxidative phosphorylation. The complex plays an important role in the uptake of multiple carbon sources present in different host niches. The sequence is that of Cytochrome b-c1 complex subunit 9, mitochondrial from Candida albicans (strain SC5314 / ATCC MYA-2876) (Yeast).